We begin with the raw amino-acid sequence, 371 residues long: Neuropeptide Y receptor type 6 (371 aa).

The Extracellular segment spans residues 1 to 31; the sequence is MEVSLNDPASNKTSAKSNSSAFFYFESCQSP. Residues Asn11 and Asn18 are each glycosylated (N-linked (GlcNAc...) asparagine). The chain crosses the membrane as a helical span at residues 32–52; that stretch reads SLALLLLLIAYTVVLIMGICG. The Cytoplasmic portion of the chain corresponds to 53 to 72; it reads NLSLITIIFKKQREAQNVTN. Residues 73-93 traverse the membrane as a helical segment; it reads ILIANLSLSDILVCVMCIPFT. At 94 to 111 the chain is on the extracellular side; it reads AIYTLMDRWIFGNTMCKL. An intrachain disulfide couples Cys109 to Cys196. A helical transmembrane segment spans residues 112–132; it reads TSYVQSVSISVSIFSLVLIAI. Over 133 to 150 the chain is Cytoplasmic; sequence ERYQLIVNPRGWKPSASH. A helical transmembrane segment spans residues 151–171; it reads AYWGIMLIWLFSLLLSIPLLL. At 172 to 213 the chain is on the extracellular side; that stretch reads SYHLTDEPFRNLSLPTDLYSHHVVCVEHWPSKTNQLLYSTSL. Asn182 carries an N-linked (GlcNAc...) asparagine glycan. The chain crosses the membrane as a helical span at residues 214–234; sequence IMLQYFVPLGFMFICYLKIVI. Over 235-263 the chain is Cytoplasmic; it reads CLHKRNSKIDRRRENESRLTENKRINTML. The helical transmembrane segment at 264 to 284 threads the bilayer; it reads ISIVVTFAACWLPLNTFNVIF. At 285 to 297 the chain is on the extracellular side; sequence DWYHEVLMSCHHD. A helical membrane pass occupies residues 298–318; it reads LVFAICHLVAMVSTCINPLFY. Topologically, residues 319-371 are cytoplasmic; the sequence is GFLNRNFQKDLVVLIHHCLCFALRERYENIAISTLHTDESKGSLRVAHIPAGI. The S-palmitoyl cysteine moiety is linked to residue Cys336.

Belongs to the G-protein coupled receptor 1 family. Expressed in hippocampus, striatum, hypothalamus, cerebellum, small intestine, colon and adrenal gland.

Its subcellular location is the cell membrane. Functionally, receptor for neuropeptide Y and peptide YY. The activity of this receptor is mediated by G proteins that inhibit adenylate cyclase activity. The chain is Neuropeptide Y receptor type 6 (NPY6R) from Oryctolagus cuniculus (Rabbit).